The primary structure comprises 367 residues: UDP-galactopyranose mutase (367 aa).

FAD is bound by residues Phe-12, 31-32 (EK), Asn-39, and 56-57 (HI). Phe-12 lines the UDP-alpha-D-galactose pocket. The UDP-alpha-D-galactose site is built by Asn-80, Thr-152, Trp-156, and Tyr-181. 212–213 (DF) is a binding site for FAD. Asn-268, Arg-278, and Tyr-311 together coordinate UDP-alpha-D-galactose. Residue Arg-340 participates in FAD binding. Tyr-346 contacts UDP-alpha-D-galactose. 347-352 (YDMHQV) contacts FAD.

As to quaternary structure, homodimer. The cofactor is FAD.

It catalyses the reaction UDP-alpha-D-galactose = UDP-alpha-D-galactofuranose. It functions in the pathway bacterial outer membrane biogenesis; lipopolysaccharide biosynthesis. Catalyzes the interconversion through a 2-keto intermediate of uridine diphosphogalactopyranose (UDP-GalP) into uridine diphosphogalactofuranose (UDP-GalF). The sequence is that of UDP-galactopyranose mutase (glf) from Escherichia coli (strain K12).